Reading from the N-terminus, the 216-residue chain is Glycerol-3-phosphate acyltransferase (216 aa).

6 helical membrane-spanning segments follow: residues 3-23, 48-68, 82-102, 112-132, 142-162, and 166-186; these read FPIFALFSFVSGSIPFGYWIA, IGWKFGFIVLALDITKGMLPV, FQLLCGVCAVLGHMFSPFLGF, FGVFLVLTPIACLGAVLVFWV, LGSIFASITLPLVYAFSTILL, and EVSYWVLGTMVFISFGIILTH.

Belongs to the PlsY family. As to quaternary structure, probably interacts with PlsX.

The protein resides in the cell inner membrane. The enzyme catalyses an acyl phosphate + sn-glycerol 3-phosphate = a 1-acyl-sn-glycero-3-phosphate + phosphate. It participates in lipid metabolism; phospholipid metabolism. Catalyzes the transfer of an acyl group from acyl-phosphate (acyl-PO(4)) to glycerol-3-phosphate (G3P) to form lysophosphatidic acid (LPA). This enzyme utilizes acyl-phosphate as fatty acyl donor, but not acyl-CoA or acyl-ACP. The sequence is that of Glycerol-3-phosphate acyltransferase from Leptospira interrogans serogroup Icterohaemorrhagiae serovar Lai (strain 56601).